Consider the following 265-residue polypeptide: Hydroxyethylthiazole kinase (265 aa).

Met-36 contacts substrate. The ATP site is built by Lys-112 and Ser-160. Gly-187 is a substrate binding site.

It belongs to the Thz kinase family. It depends on Mg(2+) as a cofactor.

It catalyses the reaction 5-(2-hydroxyethyl)-4-methylthiazole + ATP = 4-methyl-5-(2-phosphooxyethyl)-thiazole + ADP + H(+). The protein operates within cofactor biosynthesis; thiamine diphosphate biosynthesis; 4-methyl-5-(2-phosphoethyl)-thiazole from 5-(2-hydroxyethyl)-4-methylthiazole: step 1/1. In terms of biological role, catalyzes the phosphorylation of the hydroxyl group of 4-methyl-5-beta-hydroxyethylthiazole (THZ). In Clostridium perfringens (strain 13 / Type A), this protein is Hydroxyethylthiazole kinase.